The following is a 502-amino-acid chain: NAD(P)H-quinone oxidoreductase chain 4, chloroplastic (502 aa).

14 consecutive transmembrane segments (helical) span residues Phe4–Phe24, Ile37–Leu57, Val87–Val107, Leu113–Ser130, Leu134–Met154, Phe167–Leu187, Ala208–Ile228, His242–Val262, Ala272–Ala292, Ile305–Asp325, Gly330–Gly350, Ile374–Ala396, Ile416–Met436, and Leu464–Val484.

Belongs to the complex I subunit 4 family.

The protein resides in the plastid. The protein localises to the chloroplast thylakoid membrane. It catalyses the reaction a plastoquinone + NADH + (n+1) H(+)(in) = a plastoquinol + NAD(+) + n H(+)(out). The catalysed reaction is a plastoquinone + NADPH + (n+1) H(+)(in) = a plastoquinol + NADP(+) + n H(+)(out). This Ranunculus macranthus (Large buttercup) protein is NAD(P)H-quinone oxidoreductase chain 4, chloroplastic.